Here is a 439-residue protein sequence, read N- to C-terminus: Ribosomal protein uS12 methylthiotransferase RimO (439 aa).

The MTTase N-terminal domain occupies 3–113 (HKVGFVSLGC…VVNAVHQHLP (111 aa)). 6 residues coordinate [4Fe-4S] cluster: Cys12, Cys48, Cys77, Cys144, Cys148, and Cys151. Residues 130–367 (LTPRHYAYLK…MQVQAEISRN (238 aa)) enclose the Radical SAM core domain. The TRAM domain maps to 370–436 (KNKIGSTQTV…DYDLYGDLEY (67 aa)).

Belongs to the methylthiotransferase family. RimO subfamily. [4Fe-4S] cluster is required as a cofactor.

It localises to the cytoplasm. It catalyses the reaction L-aspartate(89)-[ribosomal protein uS12]-hydrogen + (sulfur carrier)-SH + AH2 + 2 S-adenosyl-L-methionine = 3-methylsulfanyl-L-aspartate(89)-[ribosomal protein uS12]-hydrogen + (sulfur carrier)-H + 5'-deoxyadenosine + L-methionine + A + S-adenosyl-L-homocysteine + 2 H(+). Functionally, catalyzes the methylthiolation of an aspartic acid residue of ribosomal protein uS12. The polypeptide is Ribosomal protein uS12 methylthiotransferase RimO (Legionella pneumophila (strain Corby)).